Reading from the N-terminus, the 308-residue chain is Phosphoribosylaminoimidazole-succinocarboxamide synthase (308 aa).

Belongs to the SAICAR synthetase family.

The enzyme catalyses 5-amino-1-(5-phospho-D-ribosyl)imidazole-4-carboxylate + L-aspartate + ATP = (2S)-2-[5-amino-1-(5-phospho-beta-D-ribosyl)imidazole-4-carboxamido]succinate + ADP + phosphate + 2 H(+). The protein operates within purine metabolism; IMP biosynthesis via de novo pathway; 5-amino-1-(5-phospho-D-ribosyl)imidazole-4-carboxamide from 5-amino-1-(5-phospho-D-ribosyl)imidazole-4-carboxylate: step 1/2. This Xanthomonas euvesicatoria pv. vesicatoria (strain 85-10) (Xanthomonas campestris pv. vesicatoria) protein is Phosphoribosylaminoimidazole-succinocarboxamide synthase.